The chain runs to 554 residues: Probable pectinesterase/pectinesterase inhibitor 6 (554 aa).

The signal sequence occupies residues 1 to 32 (MDHKILLTPPKSLYTKCIITIIYVVSISHLNA). The pectinesterase inhibitor 6 stretch occupies residues 29 to 183 (HLNAHFITSC…TKSISNSLAV (155 aa)). Residues asparagine 119 and asparagine 172 are each glycosylated (N-linked (GlcNAc...) asparagine). Residues 250-540 (DLVVAKDGSG…FTVENFLDGN (291 aa)) form a pectinesterase 6 region. 2 residues coordinate substrate: threonine 327 and glutamine 357. Aspartate 380 functions as the Proton donor; for pectinesterase activity in the catalytic mechanism. Cysteine 394 and cysteine 414 are joined by a disulfide. Aspartate 401 (nucleophile; for pectinesterase activity) is an active-site residue. Arginine 460 and tryptophan 462 together coordinate substrate.

It in the N-terminal section; belongs to the PMEI family. In the C-terminal section; belongs to the pectinesterase family. In terms of tissue distribution, expressed in rosette leaves, flower and siliques.

Its subcellular location is the secreted. It is found in the cell wall. The enzyme catalyses [(1-&gt;4)-alpha-D-galacturonosyl methyl ester](n) + n H2O = [(1-&gt;4)-alpha-D-galacturonosyl](n) + n methanol + n H(+). The protein operates within glycan metabolism; pectin degradation; 2-dehydro-3-deoxy-D-gluconate from pectin: step 1/5. Acts in the modification of cell walls via demethylesterification of cell wall pectin. This is Probable pectinesterase/pectinesterase inhibitor 6 (PME6) from Arabidopsis thaliana (Mouse-ear cress).